The sequence spans 637 residues: Dihydrolipoyllysine-residue acetyltransferase component of pyruvate dehydrogenase complex, mitochondrial (637 aa).

The N-terminal 85 residues, 1–85 (MWRVCVRRAQ…LLGSPGRRSY (85 aa)), are a transit peptide targeting the mitochondrion. Positions 80–100 (PGRRSYSLPPHQKVPLPSLSP) are disordered. Positions 90–166 (HQKVPLPSLS…PIGSIICITV (77 aa)) constitute a Lipoyl-binding 1 domain. Position 99 is a phosphoserine (serine 99). Position 131 is an N6-lipoyllysine (lysine 131). Disordered regions lie at residues 189 to 219 (QAAA…PPHM) and 307 to 340 (LKPQ…PAGP). Over residues 201 to 211 (AAPTAPSAKAP) the composition is skewed to low complexity. One can recognise a Lipoyl-binding 2 domain in the interval 218–287 (HMQVSAVGEQ…PLGAPLCIIV (70 aa)). Over residues 310–321 (QAPPPVPPPVAA) the composition is skewed to pro residues. A compositionally biased stretch (low complexity) spans 322 to 333 (APPTAQPLAPTP). In terms of domain architecture, Peripheral subunit-binding (PSBD) spans 345 to 382 (FVSPLAKKLAAERGIDLTQVKGTGPEGRIIKKDIDSFV). Arginine 451 contributes to the CoA binding site. The residue at position 456 (lysine 456) is an N6-acetyllysine. An N6-succinyllysine modification is found at lysine 463. Serine 465 contributes to the CoA binding site. Position 537 is an N6-succinyllysine (lysine 537). CoA-binding residues include serine 556, asparagine 557, and glycine 581. Catalysis depends on residues histidine 610 and aspartate 614.

It belongs to the 2-oxoacid dehydrogenase family. Part of the pyruvate dehydrogenase complex (PDHc) that is a multi-enzyme complex composed of multiple copies of three enzymes, pyruvate dehydrogenase (subunits PDH1A and PDHB, E1 component), dihydrolipoamide acetyltransferase (DLAT, E2 component), and dihydrolipoamide dehydrogenase (DLD, E3 component) to which is added an additional protein the E3-binding protein (PDHX, E3BP). In terms of structural architecture, the E2 and E3BP components assemble into a 60meric central core with icosahedral symmetry. The central core is decorated with E1 and E3 proteins. Currently, two alternative models for the E2:E3BP stoichiometry are considered as being either 48:12 (E2(48)-E3BP(12)) or 40:20 (E2(40)-E3BP(20)). Interacts with PDK2 and PDK3. Interacts with SIRT4. Interacts with PDHB. (R)-lipoate is required as a cofactor. In terms of processing, delipoylated at Lys-131 by SIRT4, delipoylation decreases the PHD complex activity. In terms of tissue distribution, detected at higher levels in cauda epididymal spermatazoa than in caput epididymal spermatazoa (at protein level).

Its subcellular location is the mitochondrion matrix. The enzyme catalyses N(6)-[(R)-dihydrolipoyl]-L-lysyl-[protein] + acetyl-CoA = N(6)-[(R)-S(8)-acetyldihydrolipoyl]-L-lysyl-[protein] + CoA. In terms of biological role, as part of the pyruvate dehydrogenase complex, catalyzes the transfers of an acetyl group to a lipoic acid moiety. The pyruvate dehydrogenase complex, catalyzes the overall conversion of pyruvate to acetyl-CoA and CO(2), and thereby links cytoplasmic glycolysis and the mitochondrial tricarboxylic acid (TCA) cycle. This is Dihydrolipoyllysine-residue acetyltransferase component of pyruvate dehydrogenase complex, mitochondrial from Mesocricetus auratus (Golden hamster).